The following is a 384-amino-acid chain: Polar flagellin C (384 aa).

A coiled-coil region spans residues 317-347 (AKQNRLSHSINNLANIQENVDASNSRIKDTD).

Belongs to the bacterial flagellin family. In terms of assembly, heteromer of multiple flagellin subunits including FlaA, FlaB/D, FlaC, FlaE and FlaF. Homomer of FlaC is not able to form a functional filament.

It is found in the secreted. The protein localises to the bacterial flagellum. Functionally, flagellin is the subunit protein which polymerizes to form the filaments of bacterial flagella. FlaC is not essential for polar flagellar synthesis and swimming motility. Homomer of FlaC is not able to form a functional filament. In Vibrio parahaemolyticus serotype O3:K6 (strain RIMD 2210633), this protein is Polar flagellin C (flaC).